Here is a 100-residue protein sequence, read N- to C-terminus: Large ribosomal subunit protein eL31 (100 aa).

The protein belongs to the eukaryotic ribosomal protein eL31 family.

This is Large ribosomal subunit protein eL31 from Hyperthermus butylicus (strain DSM 5456 / JCM 9403 / PLM1-5).